The primary structure comprises 506 residues: UDP-glycosyltransferase eriJ (506 aa).

The protein belongs to the UDP-glycosyltransferase family.

The catalysed reaction is 11-O-acetylcyathatriol + UDP-alpha-D-xylose = erinacine Q + UDP + H(+). It carries out the reaction 11-O-acetylcyathatriol + UDP-alpha-D-glucose = erinacine Q2 + UDP + H(+). The protein operates within secondary metabolite biosynthesis. Its function is as follows. UDP-glycosyltransferase; part of the gene cluster that mediates the biosynthesis of erinacines, cyathane-xylosides that show unique biological activities, including leishmanicidal activity, stimulating activity for nerve growth-factor synthesis, and agonistic activity toward the kappa opioid receptor. Within the pathway, eriJ tranfers xylose from UDP-xylose onto C-14 of 11-O-acetyl-cyathatriol to form eracine Q, and, at a lower rate, glucose from UDP-D-glucose to produce eracine Q2. The first step of the erinacines biosynthesis pathway is catalyzed by the geranylgeranyl diphosphate (GGPP) synthase eriE via conversion of farnesyl pyrophosphate and isopentyl pyrophosphate into geranylgeranyl pyrophosphate (GGPP). GGPP is then substrate of the diterpene cyclase eriG for the production of cyatha-3,12-diene. The cytochrome P450 monooxygenase eriI then hydroxylates cyatha-3,12-diene at C-14 of the seven-membered ring to produce erinacol, which is further hydroxylated at C-15 by the cytochrome P450 monooxygenase eriC to yield cyathadiol. The cytochrome P450 monooxygenase eriA then catalyzes C-11 hydroxylation in the presence of the short chain dehydrogenase/reductase (SDR) eriH, which leads to the production of cyathatriol. The acetyltransferase eriL converts cyathatriol into 11-O-acetyl-cyathatriol. The SDR eriH catalyzes further oxidation of 11-O-acetyl-cyathatriol into 1-O-acetylcyathin A3. Finally, the glycosyl transferase eriJ tranfers xylose from UDP-xylose onto C-14 of 11-O-acetyl-cyathatriol to form eracine Q. EriJ is also able to convert 11-O-acetyl-cyathatriol to eracine Q2 by using UDP-D-glucose as cosubstrate, but at a lower rate. The protein is UDP-glycosyltransferase eriJ of Hericium erinaceus (Lion's mane mushroom).